Reading from the N-terminus, the 240-residue chain is Sulfite dehydrogenase subunit B (240 aa).

4Fe-4S ferredoxin-type domains follow at residues Leu-4–Pro-34, Thr-64–Asp-95, and Gly-97–Gln-126. Positions 13, 16, 19, 23, 73, 76, 81, 85, 106, 109, 112, and 116 each coordinate [4Fe-4S] cluster.

As to quaternary structure, forms a heterotrimeric membrane-bound complex composed of a catalytic heterodimer (SoeAB) and a membrane anchor protein (SoeC). [4Fe-4S] cluster serves as cofactor.

Its subcellular location is the cell inner membrane. Its function is as follows. Part of the SoeABC complex that catalyzes the oxidation of sulfite to sulfate. SoeB is probably the electron transfer subunit. The chain is Sulfite dehydrogenase subunit B from Allochromatium vinosum (strain ATCC 17899 / DSM 180 / NBRC 103801 / NCIMB 10441 / D) (Chromatium vinosum).